The chain runs to 481 residues: Pentatricopeptide repeat-containing protein At2g48000 (481 aa).

9 PPR repeats span residues 147–181 (TTSVYNALMGAYLCNGLSHHCEQLFLDFNSQQDGP), 187–221 (SVSTYNILISLYGRLIMVERMESVFLQLQQLNILP), 222–256 (DSSTYNNLIAGYIYAWDWDKMEATFHSMKNGLVKP), 257–287 (TLATYLLMLRGYANSGNLLRMEDMYQAVKRH), 292–324 (EIKLIESMICAYYRSCHKDRIRKIKTLSKLIPK), 328–362 (KPWLYLLLMQVYAKDDNLHAMENFIDQAITKGLQI), 364–398 (TDGIMRSIVASYFRCNAVDKLAKFVQRANSAGWKM), 399–433 (SRSMFHGLMIMYGSQKRFKEMENVLSEMESFKISR), and 434–469 (SKKTLCILLRVYAATHGQEHKVNQVAGMMLKHGHDF).

This sequence belongs to the PPR family. P subfamily.

The chain is Pentatricopeptide repeat-containing protein At2g48000 from Arabidopsis thaliana (Mouse-ear cress).